The following is a 675-amino-acid chain: DNA ligase (675 aa).

NAD(+) contacts are provided by residues 32 to 36, 81 to 82, and Glu113; these read DAEYD and SL. Lys115 acts as the N6-AMP-lysine intermediate in catalysis. Positions 136, 173, 291, and 315 each coordinate NAD(+). Zn(2+)-binding residues include Cys409, Cys412, Cys427, and Cys433. The BRCT domain occupies 595 to 675; that stretch reads SEKTYFFNKK…ELNSLIRIKE (81 aa).

This sequence belongs to the NAD-dependent DNA ligase family. LigA subfamily. The cofactor is Mg(2+). It depends on Mn(2+) as a cofactor.

The enzyme catalyses NAD(+) + (deoxyribonucleotide)n-3'-hydroxyl + 5'-phospho-(deoxyribonucleotide)m = (deoxyribonucleotide)n+m + AMP + beta-nicotinamide D-nucleotide.. Its function is as follows. DNA ligase that catalyzes the formation of phosphodiester linkages between 5'-phosphoryl and 3'-hydroxyl groups in double-stranded DNA using NAD as a coenzyme and as the energy source for the reaction. It is essential for DNA replication and repair of damaged DNA. This is DNA ligase from Buchnera aphidicola subsp. Acyrthosiphon pisum (strain 5A).